Reading from the N-terminus, the 385-residue chain is tRNA pseudouridine synthase D (385 aa).

Residue Asp-65 is the Nucleophile of the active site. Residues 143–345 (GCENYFGEQR…SDGVRKAFFK (203 aa)) enclose the TRUD domain.

This sequence belongs to the pseudouridine synthase TruD family.

It catalyses the reaction uridine(13) in tRNA = pseudouridine(13) in tRNA. Functionally, responsible for synthesis of pseudouridine from uracil-13 in transfer RNAs. In Aquifex aeolicus (strain VF5), this protein is tRNA pseudouridine synthase D.